The chain runs to 418 residues: Thyroid hormone receptor alpha-A (418 aa).

The tract at residues methionine 1–serine 38 is disordered. A modulating region spans residues methionine 1–proline 60. 2 NR C4-type zinc fingers span residues cysteine 61–cysteine 81 and cysteine 99–cysteine 123. A DNA-binding region (nuclear receptor) is located at residues cysteine 61–aspartate 135. Positions glutamate 171–aspartate 415 constitute an NR LBD domain.

The protein belongs to the nuclear hormone receptor family. NR1 subfamily. In terms of assembly, binds to thyroid hormone receptor element (TRE) weakly as homodimers and monomers, but binds TRE with much higher affinity as heterodimers with retinoid X receptors. Can bind DNA as a heterodimer with either rxra or rxrg.

The protein localises to the nucleus. Functionally, high affinity receptor for triiodothyronine (T3). The protein is Thyroid hormone receptor alpha-A (thra-a) of Xenopus laevis (African clawed frog).